A 262-amino-acid polypeptide reads, in one-letter code: Transmembrane protein 270 (262 aa).

5 helical membrane passes run Leu6–Ile26, Ala30–Leu50, Pro67–Leu87, Leu92–Gly112, and Leu127–Trp147. Residues Gln226–Glu262 are disordered. Positions Thr240–Glu262 are enriched in pro residues.

It localises to the membrane. The sequence is that of Transmembrane protein 270 from Bos taurus (Bovine).